Here is a 388-residue protein sequence, read N- to C-terminus: Succinate--CoA ligase [ADP-forming] subunit beta (388 aa).

In terms of domain architecture, ATP-grasp spans 9-244 (KQLFAEYGLP…PSQDDPREAH (236 aa)). ATP contacts are provided by residues Lys46, 53-55 (GRG), Glu99, Thr102, and Glu107. Positions 199 and 213 each coordinate Mg(2+). Substrate-binding positions include Asn264 and 321 to 323 (GIV).

The protein belongs to the succinate/malate CoA ligase beta subunit family. Heterotetramer of two alpha and two beta subunits. It depends on Mg(2+) as a cofactor.

The catalysed reaction is succinate + ATP + CoA = succinyl-CoA + ADP + phosphate. It catalyses the reaction GTP + succinate + CoA = succinyl-CoA + GDP + phosphate. It functions in the pathway carbohydrate metabolism; tricarboxylic acid cycle; succinate from succinyl-CoA (ligase route): step 1/1. Functionally, succinyl-CoA synthetase functions in the citric acid cycle (TCA), coupling the hydrolysis of succinyl-CoA to the synthesis of either ATP or GTP and thus represents the only step of substrate-level phosphorylation in the TCA. The beta subunit provides nucleotide specificity of the enzyme and binds the substrate succinate, while the binding sites for coenzyme A and phosphate are found in the alpha subunit. This Pseudomonas syringae pv. tomato (strain ATCC BAA-871 / DC3000) protein is Succinate--CoA ligase [ADP-forming] subunit beta.